The sequence spans 161 residues: S-ribosylhomocysteine lyase (161 aa).

The Fe cation site is built by His53, His57, and Cys124.

Belongs to the LuxS family. As to quaternary structure, homodimer. Fe cation serves as cofactor.

The enzyme catalyses S-(5-deoxy-D-ribos-5-yl)-L-homocysteine = (S)-4,5-dihydroxypentane-2,3-dione + L-homocysteine. Involved in the synthesis of autoinducer 2 (AI-2) which is secreted by bacteria and is used to communicate both the cell density and the metabolic potential of the environment. The regulation of gene expression in response to changes in cell density is called quorum sensing. Catalyzes the transformation of S-ribosylhomocysteine (RHC) to homocysteine (HC) and 4,5-dihydroxy-2,3-pentadione (DPD). The sequence is that of S-ribosylhomocysteine lyase from Phocaeicola vulgatus (strain ATCC 8482 / DSM 1447 / JCM 5826 / CCUG 4940 / NBRC 14291 / NCTC 11154) (Bacteroides vulgatus).